The chain runs to 430 residues: Trigger factor (430 aa).

Residues 163-248 (GNIAIIDFKG…VKEIKVKEIP (86 aa)) enclose the PPIase FKBP-type domain.

Belongs to the FKBP-type PPIase family. Tig subfamily.

The protein resides in the cytoplasm. The catalysed reaction is [protein]-peptidylproline (omega=180) = [protein]-peptidylproline (omega=0). Involved in protein export. Acts as a chaperone by maintaining the newly synthesized protein in an open conformation. Functions as a peptidyl-prolyl cis-trans isomerase. In Clostridium kluyveri (strain NBRC 12016), this protein is Trigger factor.